Consider the following 468-residue polypeptide: Ammonium transporter Amt2 (468 aa).

The next 12 membrane-spanning stretches (helical) occupy residues 1-21, 39-59, 77-97, 123-143, 156-176, 194-214, 236-256, 268-288, 297-317, 321-341, 350-370, and 400-420; these read MVGRMCVAVLIVLLLVATAGA, FVWALICGFLVMFMQAGFAML, LMDFAVGSLAFFAVGFALMMG, LWFFMLVFAATAATIVSGSIA, AVVSAVIYPIYGHWLWGGGWL, FAGSGVVHALGGYIALAAVML, LAFAVIGTFILWFGWFGFNAG, IIASNTNLAAAAGAVTAMAIT, VGMTCNGAVAGLVAITAPCAW, WSSVVIGTIAGFIATYGYWWL, VGAIPVHGFSGTWGLIALGIF, and LISAIVNFAWAFGTGFALFWI.

This sequence belongs to the ammonia transporter channel (TC 1.A.11.2) family. In terms of assembly, homotrimer.

The protein resides in the cell membrane. In terms of biological role, involved in the uptake of ammonium/ammonia (NH(4)(+)/NH(3)). Transport is electrogenic. The chain is Ammonium transporter Amt2 from Archaeoglobus fulgidus (strain ATCC 49558 / DSM 4304 / JCM 9628 / NBRC 100126 / VC-16).